The sequence spans 944 residues: Translation factor GUF1 homolog, mitochondrial (944 aa).

A tr-type G domain is found at Lys-201–Ile-379. GTP is bound by residues Ala-210–Ser-217, Asp-271–His-275, and Asn-325–Asp-328.

The protein belongs to the TRAFAC class translation factor GTPase superfamily. Classic translation factor GTPase family. LepA subfamily.

It localises to the mitochondrion inner membrane. It carries out the reaction GTP + H2O = GDP + phosphate + H(+). In terms of biological role, promotes mitochondrial protein synthesis. May act as a fidelity factor of the translation reaction, by catalyzing a one-codon backward translocation of tRNAs on improperly translocated ribosomes. Binds to mitochondrial ribosomes in a GTP-dependent manner. This Plasmodium yoelii yoelii protein is Translation factor GUF1 homolog, mitochondrial.